The primary structure comprises 611 residues: Chaperone protein DnaK (611 aa).

Thr173 carries the phosphothreonine; by autocatalysis modification. Residues 577–592 are compositionally biased toward low complexity; that stretch reads QAAAGQAEGAQGAQDA. The tract at residues 577–611 is disordered; sequence QAAAGQAEGAQGAQDAGTKKDNVVDAEFEEVKEDK. The segment covering 600-611 has biased composition (acidic residues); sequence VDAEFEEVKEDK.

It belongs to the heat shock protein 70 family.

In terms of biological role, acts as a chaperone. The protein is Chaperone protein DnaK of Bacillus cereus (strain G9842).